Here is a 293-residue protein sequence, read N- to C-terminus: Glutamyl-Q tRNA(Asp) synthetase (293 aa).

L-glutamate is bound by residues 4-8 (RYAPS) and Glu40. Positions 7–17 (PSPSGDLHFGN) match the 'HIGH' region motif. The Zn(2+) site is built by Cys92, Cys94, Tyr113, and Cys117. Tyr180 and Arg198 together coordinate L-glutamate. Positions 236 to 240 (RLAKR) match the 'KMSKS' region motif. Lys239 serves as a coordination point for ATP.

Belongs to the class-I aminoacyl-tRNA synthetase family. GluQ subfamily. It depends on Zn(2+) as a cofactor.

Its function is as follows. Catalyzes the tRNA-independent activation of glutamate in presence of ATP and the subsequent transfer of glutamate onto a tRNA(Asp). Glutamate is transferred on the 2-amino-5-(4,5-dihydroxy-2-cyclopenten-1-yl) moiety of the queuosine in the wobble position of the QUC anticodon. This is Glutamyl-Q tRNA(Asp) synthetase from Corynebacterium glutamicum (strain ATCC 13032 / DSM 20300 / JCM 1318 / BCRC 11384 / CCUG 27702 / LMG 3730 / NBRC 12168 / NCIMB 10025 / NRRL B-2784 / 534).